Consider the following 292-residue polypeptide: 4-hydroxy-tetrahydrodipicolinate synthase (292 aa).

Residue T45 coordinates pyruvate. The Proton donor/acceptor role is filled by Y133. Residue K161 is the Schiff-base intermediate with substrate of the active site. Residue I203 coordinates pyruvate.

The protein belongs to the DapA family. Homotetramer; dimer of dimers.

The protein resides in the cytoplasm. It catalyses the reaction L-aspartate 4-semialdehyde + pyruvate = (2S,4S)-4-hydroxy-2,3,4,5-tetrahydrodipicolinate + H2O + H(+). Its pathway is amino-acid biosynthesis; L-lysine biosynthesis via DAP pathway; (S)-tetrahydrodipicolinate from L-aspartate: step 3/4. In terms of biological role, catalyzes the condensation of (S)-aspartate-beta-semialdehyde [(S)-ASA] and pyruvate to 4-hydroxy-tetrahydrodipicolinate (HTPA). The sequence is that of 4-hydroxy-tetrahydrodipicolinate synthase from Vibrio vulnificus (strain CMCP6).